Consider the following 472-residue polypeptide: Methanethiol oxidase (472 aa).

Ala-2 is subject to N-acetylalanine. Phosphoserine is present on residues Ser-111, Ser-371, and Ser-467.

This sequence belongs to the selenium-binding protein family. As to quaternary structure, interacts with USP33. In terms of processing, the N-terminus is blocked.

It is found in the nucleus. It localises to the cytoplasm. The protein resides in the cytosol. Its subcellular location is the membrane. It carries out the reaction methanethiol + O2 + H2O = hydrogen sulfide + formaldehyde + H2O2 + H(+). The protein operates within organosulfur degradation. Its function is as follows. Catalyzes the oxidation of methanethiol, an organosulfur compound known to be produced in substantial amounts by gut bacteria. Selenium-binding protein which may be involved in the sensing of reactive xenobiotics in the cytoplasm. May be involved in intra-Golgi protein transport. This chain is Methanethiol oxidase (SELENBP1), found in Pongo abelii (Sumatran orangutan).